Here is a 309-residue protein sequence, read N- to C-terminus: Nudix hydrolase 14, chloroplastic (309 aa).

A chloroplast-targeting transit peptide spans 1–60; it reads MAGFTLLPSRLLAFPSRALPRRLHHHHAKLILRCKMSSSSSSLTQSITLPSQPNEPVLVS. The Nudix hydrolase domain maps to 139–292; it reads ARGPAVAVLI…KVLMSIGLYE (154 aa). The Nudix box motif lies at 179–200; sequence MLDDDKGDFVGTAVREVEEEIG. Glu194 and Glu198 together coordinate Mg(2+).

The protein belongs to the Nudix hydrolase family. Homodimer. Mg(2+) serves as cofactor. Requires Mn(2+) as cofactor. As to expression, expressed in roots, leaves, stems and inflorescences.

It is found in the plastid. The protein resides in the chloroplast. It catalyses the reaction ADP-sugar + H2O = AMP + alpha-D-aldose 1-phosphate.. Functionally, mediates the hydrolysis of some nucleoside diphosphate derivatives. Can use ADP-glucose, ADP-mannose and ADP-ribose as substrates. Regulates the intracellular ADP-glucose levels linked to starch biosynthesis. In Arabidopsis thaliana (Mouse-ear cress), this protein is Nudix hydrolase 14, chloroplastic (NUDT14).